A 306-amino-acid polypeptide reads, in one-letter code: Anamorsin (306 aa).

Positions 6–172 (IAPGQRVAVI…KPNFEVGSSS (167 aa)) are N-terminal SAM-like domain. Residues 173 to 224 (QLKLSFAKKTSPSGKPSVDPATAKLWTLSASDMNDEEMDLLDSDELLDSEDL) form a linker region. 4 residues coordinate [2Fe-2S] cluster: Cys-237, Cys-246, Cys-249, and Cys-251. Residues 237–251 (CKEKGKKKACKNCTC) form a fe-S binding site A region. Residues Cys-270, Cys-273, Cys-281, and Cys-284 each contribute to the [4Fe-4S] cluster site. 2 consecutive short sequence motifs (cx2C motif) follow at residues 270 to 273 (CGNC) and 281 to 284 (CASC). The tract at residues 270 to 284 (CGNCYLGDAFRCASC) is fe-S binding site B.

Belongs to the anamorsin family. In terms of assembly, monomer. Interacts with NDOR1. Interacts with CHCHD4. The cofactor is [2Fe-2S] cluster. [4Fe-4S] cluster is required as a cofactor.

It is found in the cytoplasm. The protein localises to the nucleus. The protein resides in the mitochondrion intermembrane space. Its function is as follows. Component of the cytosolic iron-sulfur (Fe-S) protein assembly (CIA) machinery required for the maturation of extramitochondrial Fe-S proteins. Part of an electron transfer chain functioning in an early step of cytosolic Fe-S biogenesis, facilitating the de novo assembly of a [4Fe-4S] cluster on the scaffold complex NUBP1-NUBP2. Electrons are transferred to CIAPIN1 from NADPH via the FAD- and FMN-containing protein NDOR1. NDOR1-CIAPIN1 are also required for the assembly of the diferric tyrosyl radical cofactor of ribonucleotide reductase (RNR), probably by providing electrons for reduction during radical cofactor maturation in the catalytic small subunit. Has anti-apoptotic effects in the cell. Involved in negative control of cell death upon cytokine withdrawal. Promotes development of hematopoietic cells. The chain is Anamorsin from Gallus gallus (Chicken).